A 431-amino-acid polypeptide reads, in one-letter code: Adenylosuccinate synthetase (431 aa).

Residues 12 to 18 (GDEGKGK) and 40 to 42 (GHT) contribute to the GTP site. The active-site Proton acceptor is the D13. Mg(2+) contacts are provided by D13 and G40. IMP is bound by residues 13–16 (DEGK), 38–41 (NAGH), T131, R145, Q225, T240, and R304. H41 (proton donor) is an active-site residue. 300–306 (TTTGRKR) is a substrate binding site. GTP-binding positions include R306, 332–334 (KLD), and 414–416 (STS).

This sequence belongs to the adenylosuccinate synthetase family. As to quaternary structure, homodimer. Mg(2+) serves as cofactor.

The protein resides in the cytoplasm. The catalysed reaction is IMP + L-aspartate + GTP = N(6)-(1,2-dicarboxyethyl)-AMP + GDP + phosphate + 2 H(+). The protein operates within purine metabolism; AMP biosynthesis via de novo pathway; AMP from IMP: step 1/2. In terms of biological role, plays an important role in the de novo pathway of purine nucleotide biosynthesis. Catalyzes the first committed step in the biosynthesis of AMP from IMP. The polypeptide is Adenylosuccinate synthetase (Dinoroseobacter shibae (strain DSM 16493 / NCIMB 14021 / DFL 12)).